We begin with the raw amino-acid sequence, 222 residues long: Ethylene-inducing xylanase 2 (222 aa).

The N-terminal stretch at 1–19 (MITFSSLLVTFSAISTSLA) is a signal peptide. Residues 36–222 (QRNESSLVRR…GEGAATQTVS (187 aa)) form the GH11 domain. N-linked (GlcNAc...) asparagine glycosylation is found at N38 and N94. The active-site Nucleophile is E120. Catalysis depends on E209, which acts as the Proton donor.

It belongs to the glycosyl hydrolase 11 (cellulase G) family.

The catalysed reaction is Endohydrolysis of (1-&gt;4)-beta-D-xylosidic linkages in xylans.. The protein operates within glycan degradation; xylan degradation. In terms of biological role, endo-1,4-beta-xylanase involved in the hydrolysis of xylan, a major structural heterogeneous polysaccharide found in plant biomass representing the second most abundant polysaccharide in the biosphere, after cellulose. May act as an elicitor of plant defense responses in certain plants but does not exhibit any cell death when transiently expressed in N.benthamiana. This Botryotinia fuckeliana (strain B05.10) (Noble rot fungus) protein is Ethylene-inducing xylanase 2.